Here is a 220-residue protein sequence, read N- to C-terminus: Ribose-5-phosphate isomerase A (220 aa).

Substrate-binding positions include 25 to 28, 80 to 83, and 93 to 96; these read TGST, DGAD, and KGGG. The Proton acceptor role is filled by Glu-102. Lys-120 contributes to the substrate binding site.

Belongs to the ribose 5-phosphate isomerase family. Homodimer.

It catalyses the reaction aldehydo-D-ribose 5-phosphate = D-ribulose 5-phosphate. Its pathway is carbohydrate degradation; pentose phosphate pathway; D-ribose 5-phosphate from D-ribulose 5-phosphate (non-oxidative stage): step 1/1. Its function is as follows. Catalyzes the reversible conversion of ribose-5-phosphate to ribulose 5-phosphate. This is Ribose-5-phosphate isomerase A from Bacillus thuringiensis subsp. konkukian (strain 97-27).